Here is a 79-residue protein sequence, read N- to C-terminus: MKTQLAFLAITVILMQLFAQTEAGFWGKLWEGVKNAIGKRGLRNVDQIADLFDSGLSDADDLFDSGLSDADAKFMKMFM.

A signal peptide spans 1-23; sequence MKTQLAFLAITVILMQLFAQTEA. I37 is modified (isoleucine amide). A propeptide spanning residues 41–79 is cleaved from the precursor; it reads GLRNVDQIADLFDSGLSDADDLFDSGLSDADAKFMKMFM.

The protein belongs to the non-disulfide-bridged peptide (NDBP) superfamily. Short antimicrobial peptide (group 4) family. In terms of tissue distribution, expressed by the venom gland.

It localises to the secreted. The protein resides in the target cell membrane. Inhibits the growth of Gram-positive (S.aureus, MIC=15 uM) and Gram-negative bacteria (E.coli, MIC=10 uM and P.aeruginosa, MIC=10 uM). It also shows 26% of hemolysis when 15 uM are tested (81% at 50 uM). Its function is as follows. Inhibits the growth of Gram-negative bacteria (E.coli, MIC=25 uM and P.aeruginosa, MIC=40 uM). It also shows 7% of hemolysis when 50 uM are tested. Does not show activity against the Gram-positive bacteria S.aureus. This Urodacus yaschenkoi (Inland robust scorpion) protein is Antimicrobial peptide UyCT1.